We begin with the raw amino-acid sequence, 360 residues long: D-alanine--D-alanine ligase (360 aa).

Positions 149-353 (KKLMAAEGLP…YEELLDVLVQ (205 aa)) constitute an ATP-grasp domain. 176–231 (KNLLGLPVFVKPARGGSSIGISRVTAWEDFNKAVGLARAHDEKVIVESEIVGSEVE) contacts ATP. Asp308, Glu320, and Asn322 together coordinate Mg(2+).

It belongs to the D-alanine--D-alanine ligase family. The cofactor is Mg(2+). Mn(2+) serves as cofactor.

It is found in the cytoplasm. It catalyses the reaction 2 D-alanine + ATP = D-alanyl-D-alanine + ADP + phosphate + H(+). It functions in the pathway cell wall biogenesis; peptidoglycan biosynthesis. In terms of biological role, cell wall formation. The protein is D-alanine--D-alanine ligase of Corynebacterium glutamicum (strain R).